The sequence spans 432 residues: UDP-N-acetylglucosamine 1-carboxyvinyltransferase (432 aa).

22–23 (KN) is a binding site for phosphoenolpyruvate. UDP-N-acetyl-alpha-D-glucosamine is bound at residue Arg101. Cys125 acts as the Proton donor in catalysis. Cys125 bears the 2-(S-cysteinyl)pyruvic acid O-phosphothioketal mark. Residues 130–134 (RPVDL), Asp315, and Ile337 each bind UDP-N-acetyl-alpha-D-glucosamine.

It belongs to the EPSP synthase family. MurA subfamily.

The protein localises to the cytoplasm. The catalysed reaction is phosphoenolpyruvate + UDP-N-acetyl-alpha-D-glucosamine = UDP-N-acetyl-3-O-(1-carboxyvinyl)-alpha-D-glucosamine + phosphate. The protein operates within cell wall biogenesis; peptidoglycan biosynthesis. Its function is as follows. Cell wall formation. Adds enolpyruvyl to UDP-N-acetylglucosamine. The chain is UDP-N-acetylglucosamine 1-carboxyvinyltransferase from Paramagnetospirillum magneticum (strain ATCC 700264 / AMB-1) (Magnetospirillum magneticum).